We begin with the raw amino-acid sequence, 259 residues long: Dysbindin domain-containing protein 2 (259 aa).

Disordered regions lie at residues 27 to 56 (SCERVSPPPPLPHFRLPPLPRSRLPGPVSR) and 174 to 259 (ADVF…GACS). The segment covering 32 to 46 (SPPPPLPHFRLPPLP) has biased composition (pro residues). A compositionally biased stretch (low complexity) spans 205–223 (TSDRTTSRTSSSSSSDSST). Phosphoserine is present on residues serine 217 and serine 218. Threonine 237 is modified (phosphothreonine). Position 242 is a phosphoserine (serine 242).

It belongs to the dysbindin family. In terms of assembly, monomer. Interacts with CSNK1D and CSNK1E. In terms of tissue distribution, detected in brain.

In terms of biological role, may modulate the activity of casein kinase-1. Inhibits CSNK1D autophosphorylation (in vitro). This is Dysbindin domain-containing protein 2 (DBNDD2) from Homo sapiens (Human).